A 163-amino-acid chain; its full sequence is Urease accessory protein UreE (163 aa).

The segment at 144 to 163 (QPEPGAYGGSSAGSHDGHHH) is disordered.

Belongs to the UreE family.

The protein resides in the cytoplasm. Its function is as follows. Involved in urease metallocenter assembly. Binds nickel. Probably functions as a nickel donor during metallocenter assembly. This Aliivibrio fischeri (strain ATCC 700601 / ES114) (Vibrio fischeri) protein is Urease accessory protein UreE.